The following is a 198-amino-acid chain: Pyridoxal 5'-phosphate synthase subunit PdxT (198 aa).

52–54 provides a ligand contact to L-glutamine; it reads GES. Cysteine 84 serves as the catalytic Nucleophile. L-glutamine contacts are provided by residues arginine 116 and 143-144; that span reads IR. Residues histidine 179 and glutamate 181 each act as charge relay system in the active site.

This sequence belongs to the glutaminase PdxT/SNO family. In terms of assembly, in the presence of PdxS, forms a dodecamer of heterodimers. Only shows activity in the heterodimer.

It carries out the reaction aldehydo-D-ribose 5-phosphate + D-glyceraldehyde 3-phosphate + L-glutamine = pyridoxal 5'-phosphate + L-glutamate + phosphate + 3 H2O + H(+). It catalyses the reaction L-glutamine + H2O = L-glutamate + NH4(+). It participates in cofactor biosynthesis; pyridoxal 5'-phosphate biosynthesis. In terms of biological role, catalyzes the hydrolysis of glutamine to glutamate and ammonia as part of the biosynthesis of pyridoxal 5'-phosphate. The resulting ammonia molecule is channeled to the active site of PdxS. This is Pyridoxal 5'-phosphate synthase subunit PdxT from Caldivirga maquilingensis (strain ATCC 700844 / DSM 13496 / JCM 10307 / IC-167).